Reading from the N-terminus, the 443-residue chain is UDP-N-acetylmuramoylalanine--D-glutamate ligase (443 aa).

116–122 (GTNGKST) contributes to the ATP binding site.

The protein belongs to the MurCDEF family.

The protein resides in the cytoplasm. The enzyme catalyses UDP-N-acetyl-alpha-D-muramoyl-L-alanine + D-glutamate + ATP = UDP-N-acetyl-alpha-D-muramoyl-L-alanyl-D-glutamate + ADP + phosphate + H(+). It functions in the pathway cell wall biogenesis; peptidoglycan biosynthesis. In terms of biological role, cell wall formation. Catalyzes the addition of glutamate to the nucleotide precursor UDP-N-acetylmuramoyl-L-alanine (UMA). The protein is UDP-N-acetylmuramoylalanine--D-glutamate ligase of Novosphingobium aromaticivorans (strain ATCC 700278 / DSM 12444 / CCUG 56034 / CIP 105152 / NBRC 16084 / F199).